The chain runs to 2007 residues: Structural maintenance of chromosomes flexible hinge domain-containing protein 1 (2007 aa).

Ala2 carries the N-acetylalanine modification. Residues 111 to 702 form an ATPase activity domain region; the sequence is TKERIDFLPH…LSVTWPEGDE (592 aa). Ser833 carries the post-translational modification Phosphoserine. At Lys1350 the chain carries N6-acetyllysine. A Glycyl lysine isopeptide (Lys-Gly) (interchain with G-Cter in SUMO2) cross-link involves residue Lys1375. Thr1500 carries the post-translational modification Phosphothreonine. The 128-residue stretch at 1721–1848 folds into the SMC hinge domain; the sequence is GDILGKIAHL…DNLDAANHYR (128 aa). Lys1803 is subject to N6-succinyllysine. At Ser1975 the chain carries Phosphoserine. Residues 1984-2007 form a disordered region; it reads PIPTKRMRRESTRQNRRPKGDVPN.

It belongs to the SMC family. Highly divergent. As to quaternary structure, homodimer; homodimerizes via its SMC hinge domain. Interacts with LRIF1. In terms of processing, sumoylated with SUMO1. As to expression, during embryogenesis, specifically expressed in immature olfactory sensory neurons.

It is found in the chromosome. It carries out the reaction ATP + H2O = ADP + phosphate + H(+). In terms of biological role, non-canonical member of the structural maintenance of chromosomes (SMC) protein family that plays a key role in epigenetic silencing by regulating chromatin architecture. Promotes heterochromatin formation in both autosomes and chromosome X, probably by mediating the merge of chromatin compartments. Plays a key role in chromosome X inactivation in females by promoting the spreading of heterochromatin. Recruited to inactivated chromosome X by Xist RNA and acts by mediating the merge of chromatin compartments: promotes random chromatin interactions that span the boundaries of existing structures, leading to create a compartment-less architecture typical of inactivated chromosome X. Required to facilitate Xist RNA spreading. Also required for silencing of a subset of clustered autosomal loci in somatic cells, such as the DUX4 locus. Has ATPase activity; may participate in structural manipulation of chromatin in an ATP-dependent manner as part of its role in gene expression regulation. Also plays a role in DNA repair: localizes to sites of DNA double-strand breaks in response to DNA damage to promote the repair of DNA double-strand breaks. Acts by promoting non-homologous end joining (NHEJ) and inhibiting homologous recombination (HR) repair. Required during preimplantation development, probably acts by regulating chromatin architecture. This chain is Structural maintenance of chromosomes flexible hinge domain-containing protein 1, found in Mus musculus (Mouse).